The following is a 201-amino-acid chain: Lymphotoxin-alpha (201 aa).

The signal sequence occupies residues M1–G27. Residues P23 to S52 are disordered. Polar residues predominate over residues P31–K51. Positions P60 to L201 constitute a THD domain. The N-linked (GlcNAc...) asparagine glycan is linked to N93. C117 and C152 are disulfide-bonded.

It belongs to the tumor necrosis factor family. As to quaternary structure, homotrimer, and heterotrimer of either two LTB and one LTA subunits or (less prevalent) two LTA and one LTB subunits. Interacts with TNFRSF14.

It localises to the secreted. It is found in the membrane. Cytokine that in its homotrimeric form binds to TNFRSF1A/TNFR1, TNFRSF1B/TNFBR and TNFRSF14/HVEM. In its heterotrimeric form with LTB binds to TNFRSF3/LTBR. Lymphotoxin is produced by lymphocytes and is cytotoxic for a wide range of tumor cells in vitro and in vivo. The protein is Lymphotoxin-alpha (LTA) of Notamacropus eugenii (Tammar wallaby).